The primary structure comprises 1127 residues: Carbamoyl phosphate synthase large chain (1127 aa).

Residues 1-402 form a carboxyphosphate synthetic domain region; sequence MPKRTDIKSV…SLGKAMRSID (402 aa). ATP contacts are provided by Arg129, Arg169, Gly175, Gly176, Glu208, Ile210, Glu215, Gly241, Val242, His243, Gln285, and Glu299. Positions 133–328 constitute an ATP-grasp 1 domain; the sequence is KKVVDEAGAE…IAKIATKLAL (196 aa). 3 residues coordinate Mg(2+): Gln285, Glu299, and Asn301. Mn(2+) is bound by residues Gln285, Glu299, and Asn301. Residues 403–551 form an oligomerization domain region; that stretch reads KRHMGFNWDG…YYYSCYADET (149 aa). The carbamoyl phosphate synthetic domain stretch occupies residues 552 to 962; that stretch reads ELRPREREAV…AFAKSQLAAY (411 aa). An ATP-grasp 2 domain is found at 681–881; the sequence is GEVLKKAEMN…LAKAAARIMA (201 aa). Arg717, Lys765, Leu767, Glu772, Gly797, Val798, His799, Ser800, Gln840, and Glu852 together coordinate ATP. The Mg(2+) site is built by Gln840, Glu852, and Asn854. The Mn(2+) site is built by Gln840, Glu852, and Asn854. Residues 963-1127 are allosteric domain; it reads DGGLPTHGNV…QLFELERREF (165 aa). Residues 964–1127 form the MGS-like domain; that stretch reads GGLPTHGNVF…QLFELERREF (164 aa).

Belongs to the CarB family. As to quaternary structure, composed of two chains; the small (or glutamine) chain promotes the hydrolysis of glutamine to ammonia, which is used by the large (or ammonia) chain to synthesize carbamoyl phosphate. Tetramer of heterodimers (alpha,beta)4. It depends on Mg(2+) as a cofactor. Mn(2+) serves as cofactor.

It carries out the reaction hydrogencarbonate + L-glutamine + 2 ATP + H2O = carbamoyl phosphate + L-glutamate + 2 ADP + phosphate + 2 H(+). The enzyme catalyses hydrogencarbonate + NH4(+) + 2 ATP = carbamoyl phosphate + 2 ADP + phosphate + 2 H(+). It functions in the pathway amino-acid biosynthesis; L-arginine biosynthesis; carbamoyl phosphate from bicarbonate: step 1/1. The protein operates within pyrimidine metabolism; UMP biosynthesis via de novo pathway; (S)-dihydroorotate from bicarbonate: step 1/3. Its function is as follows. Large subunit of the glutamine-dependent carbamoyl phosphate synthetase (CPSase). CPSase catalyzes the formation of carbamoyl phosphate from the ammonia moiety of glutamine, carbonate, and phosphate donated by ATP, constituting the first step of 2 biosynthetic pathways, one leading to arginine and/or urea and the other to pyrimidine nucleotides. The large subunit (synthetase) binds the substrates ammonia (free or transferred from glutamine from the small subunit), hydrogencarbonate and ATP and carries out an ATP-coupled ligase reaction, activating hydrogencarbonate by forming carboxy phosphate which reacts with ammonia to form carbamoyl phosphate. The sequence is that of Carbamoyl phosphate synthase large chain from Bifidobacterium longum (strain DJO10A).